The following is a 689-amino-acid chain: uncharacterized protein (689 aa).

Its subcellular location is the mitochondrion. This is an uncharacterized protein from Schizosaccharomyces pombe (strain 972 / ATCC 24843) (Fission yeast).